We begin with the raw amino-acid sequence, 377 residues long: Succinyl-diaminopimelate desuccinylase (377 aa).

Position 66 (His66) interacts with Zn(2+). Asp68 is a catalytic residue. Residue Asp99 coordinates Zn(2+). The active-site Proton acceptor is Glu133. The Zn(2+) site is built by Glu134, Glu162, and His348.

The protein belongs to the peptidase M20A family. DapE subfamily. In terms of assembly, homodimer. Zn(2+) serves as cofactor. Co(2+) is required as a cofactor.

It catalyses the reaction N-succinyl-(2S,6S)-2,6-diaminopimelate + H2O = (2S,6S)-2,6-diaminopimelate + succinate. It participates in amino-acid biosynthesis; L-lysine biosynthesis via DAP pathway; LL-2,6-diaminopimelate from (S)-tetrahydrodipicolinate (succinylase route): step 3/3. Its function is as follows. Catalyzes the hydrolysis of N-succinyl-L,L-diaminopimelic acid (SDAP), forming succinate and LL-2,6-diaminopimelate (DAP), an intermediate involved in the bacterial biosynthesis of lysine and meso-diaminopimelic acid, an essential component of bacterial cell walls. The sequence is that of Succinyl-diaminopimelate desuccinylase from Histophilus somni (strain 2336) (Haemophilus somnus).